The following is a 205-amino-acid chain: Small ribosomal subunit protein uS4 (205 aa).

The segment covering 1–16 (MSKRETTKYKIDRRMG) has biased composition (basic and acidic residues). A disordered region spans residues 1-46 (MSKRETTKYKIDRRMGENIWGRPKSPVNRRDYGPGQHGQRRKGKLS). The 64-residue stretch at 94 to 157 (SRLDAVIYRA…KQLVLVLESV (64 aa)) folds into the S4 RNA-binding domain.

It belongs to the universal ribosomal protein uS4 family. In terms of assembly, part of the 30S ribosomal subunit. Contacts protein S5. The interaction surface between S4 and S5 is involved in control of translational fidelity.

Functionally, one of the primary rRNA binding proteins, it binds directly to 16S rRNA where it nucleates assembly of the body of the 30S subunit. Its function is as follows. With S5 and S12 plays an important role in translational accuracy. This is Small ribosomal subunit protein uS4 from Bartonella henselae (strain ATCC 49882 / DSM 28221 / CCUG 30454 / Houston 1) (Rochalimaea henselae).